The chain runs to 491 residues: MKYKNLRDFLELLEKQGELKRITQEIDPYLEMTEIADRTLRAGGPALLFENPKGYEIPVLCNLFGTPKRVALGMGQEDVTALRDVGRLLAFLKEPEQPKSFKDLWSTLPQFKQVLNMPTKVLSKAECQQIVFSDAEVDLYKLPIMHCWKDDVAPLVTWGLTITKGPSKKRQNLGIYRQQLIGKNKLIMRWLSHRGGALDFQEWKEARPNQPFPISVALGADPATILGAVTPVPDTLSEYAFAGLLRGNKTEVVKSISNDLEIPASAEIILEGYIDPTETALEGPYGDHTGYYNEQEYFPVFTVTHLTMRKDPIYHSTYTGRPPDEPAVLGEALNEVFIPILQKQFPEIVDFYLPPEGCSYRLAVVTIKKQYAGHAKRVMMGVWSFLRQFMYTKFVIVCDDDINARDWKDVIWAITTRSDPARDCTIIENTPIDYLDFASPIAGLGSKMGIDATNKWIGETQREWGTPIKKAPNVVKRIDDIWESLNIFAPK.

Mn(2+) is bound at residue N172. Prenylated FMN-binding positions include 175 to 177 (IYR), 189 to 191 (RWL), and 194 to 195 (RG). E238 provides a ligand contact to Mn(2+). D287 functions as the Proton donor in the catalytic mechanism.

Belongs to the UbiD family. In terms of assembly, homohexamer. Prenylated FMN serves as cofactor. Mn(2+) is required as a cofactor.

The protein resides in the cell membrane. It carries out the reaction a 4-hydroxy-3-(all-trans-polyprenyl)benzoate + H(+) = a 2-(all-trans-polyprenyl)phenol + CO2. The protein operates within cofactor biosynthesis; ubiquinone biosynthesis. In terms of biological role, catalyzes the decarboxylation of 3-octaprenyl-4-hydroxy benzoate to 2-octaprenylphenol, an intermediate step in ubiquinone biosynthesis. This Histophilus somni (strain 129Pt) (Haemophilus somnus) protein is 3-octaprenyl-4-hydroxybenzoate carboxy-lyase.